The primary structure comprises 357 residues: Chorismate synthase (357 aa).

NADP(+) contacts are provided by R48 and R54. FMN-binding positions include 125–127 (RSS), 238–239 (NA), G278, 293–297 (KPTSS), and R319.

The protein belongs to the chorismate synthase family. Homotetramer. FMNH2 is required as a cofactor.

The catalysed reaction is 5-O-(1-carboxyvinyl)-3-phosphoshikimate = chorismate + phosphate. It functions in the pathway metabolic intermediate biosynthesis; chorismate biosynthesis; chorismate from D-erythrose 4-phosphate and phosphoenolpyruvate: step 7/7. Catalyzes the anti-1,4-elimination of the C-3 phosphate and the C-6 proR hydrogen from 5-enolpyruvylshikimate-3-phosphate (EPSP) to yield chorismate, which is the branch point compound that serves as the starting substrate for the three terminal pathways of aromatic amino acid biosynthesis. This reaction introduces a second double bond into the aromatic ring system. The sequence is that of Chorismate synthase from Blochmanniella floridana.